We begin with the raw amino-acid sequence, 162 residues long: UPF0114 protein Shewmr4_0646 (162 aa).

4 consecutive transmembrane segments (helical) span residues 15–35 (IMAPIYLGLSLVLLGLGIKFF), 53–73 (LVLVTLSLIDITLVGGLIVMV), 108–128 (KVAASIVAISSIHLLKIFMDV), and 136–156 (IMWYLLIHITFVVSAFAMGYL).

The protein belongs to the UPF0114 family.

The protein localises to the cell membrane. In Shewanella sp. (strain MR-4), this protein is UPF0114 protein Shewmr4_0646.